The primary structure comprises 209 residues: rRNA N(6)-adenosine-methyltransferase METTL5 (209 aa).

Residues Q28, T31, G59, C62, V64, D81, and 108–109 (DV) each bind S-adenosyl-L-methionine.

This sequence belongs to the methyltransferase superfamily. PrmA family. As to quaternary structure, heterodimer; heterodimerizes with TRMT112. Expressed from very early development (8 post-conceptual weeks) and expression persists through adulthood in multiple substructures of the brain, including the cerebellar cortex, hippocampus, and striatum.

The protein resides in the nucleus. Its subcellular location is the presynapse. The protein localises to the postsynapse. It catalyses the reaction adenosine(1832) in 18S rRNA + S-adenosyl-L-methionine = N(6)-methyladenosine(1832) in 18S rRNA + S-adenosyl-L-homocysteine + H(+). With respect to regulation, rRNA N6-adenosine-methyltransferase activity is inhibited by zinc. Its function is as follows. Catalytic subunit of a heterodimer with TRMT112, which specifically methylates the 6th position of adenine in position 1832 of 18S rRNA. N6-methylation of adenine(1832) in 18S rRNA resides in the decoding center of 18S rRNA and is required for translation and embryonic stem cells (ESCs) pluripotency and differentiation. The protein is rRNA N(6)-adenosine-methyltransferase METTL5 of Homo sapiens (Human).